We begin with the raw amino-acid sequence, 439 residues long: Serine/threonine-protein kinase 2 (439 aa).

In terms of domain architecture, Protein kinase spans 87-439 (NDDFYHISTG…IFSDWINGRN (353 aa)). ATP-binding positions include 93–101 (ISTGGYGIV) and K117. The active-site Proton acceptor is D307.

Belongs to the protein kinase superfamily. Ser/Thr protein kinase family. In terms of processing, phosphorylated in vivo. Autophosphorylated in vitro.

The protein localises to the host endoplasmic reticulum. Its subcellular location is the host endoplasmic reticulum-Golgi intermediate compartment. It carries out the reaction L-seryl-[protein] + ATP = O-phospho-L-seryl-[protein] + ADP + H(+). It catalyses the reaction L-threonyl-[protein] + ATP = O-phospho-L-threonyl-[protein] + ADP + H(+). Its function is as follows. Essential serine-protein kinase involved in the early stage of virion morphogenesis. This chain is Serine/threonine-protein kinase 2 (OPG054), found in Monkeypox virus.